The primary structure comprises 114 residues: TSCETHQICGRKIIYRDGTTNTQEIDYCRCSGDTDCPKDDVNEISFVDWSYWEVSYYTCLTQAGNYHYCNEGAAVQPGAGPIIYRQNNVEHPYKMNCRCNPCWINKARCCTPGT.

Post-translationally, contains 6 disulfide bonds. As to expression, expressed by the venom duct.

It is found in the secreted. Functionally, acts as a neurotoxin by inhibiting an ion channel. This is Turripeptide OL22 from Iotyrris olangoensis (Sea snail).